The chain runs to 457 residues: Phosphomethylpyrimidine synthase (457 aa).

Residues N80, M109, Y139, H175, 195–197 (SRG), 236–239 (DSLR), and E275 contribute to the substrate site. Residue H279 coordinates Zn(2+). A substrate-binding site is contributed by Y302. H343 lines the Zn(2+) pocket. Residues C423, C426, and C431 each contribute to the [4Fe-4S] cluster site.

The protein belongs to the ThiC family. It depends on [4Fe-4S] cluster as a cofactor.

It carries out the reaction 5-amino-1-(5-phospho-beta-D-ribosyl)imidazole + S-adenosyl-L-methionine = 4-amino-2-methyl-5-(phosphooxymethyl)pyrimidine + CO + 5'-deoxyadenosine + formate + L-methionine + 3 H(+). Its pathway is cofactor biosynthesis; thiamine diphosphate biosynthesis. Its function is as follows. Catalyzes the synthesis of the hydroxymethylpyrimidine phosphate (HMP-P) moiety of thiamine from aminoimidazole ribotide (AIR) in a radical S-adenosyl-L-methionine (SAM)-dependent reaction. The sequence is that of Phosphomethylpyrimidine synthase from Nostoc sp. (strain PCC 7120 / SAG 25.82 / UTEX 2576).